Here is a 238-residue protein sequence, read N- to C-terminus: Ribosome-recycling factor, mitochondrial (238 aa).

It belongs to the RRF family.

Its subcellular location is the mitochondrion. Functionally, responsible for the release of ribosomes from messenger RNA at the termination of protein biosynthesis. May increase the efficiency of translation by recycling ribosomes from one round of translation to another. This chain is Ribosome-recycling factor, mitochondrial, found in Caenorhabditis elegans.